The chain runs to 309 residues: MLSSSFERNLHQPLLFIDKDTRVVIQGIGNQGQYHSRLMREYGTKVVGAVHPKKAGKIIAGLPIFKNMKEVVKRTDANASLIFVPAPGAAAACIEAAEAGMGLVVCITEHIPQHDMIKVKKVMKETGCQLIGPNCPGLIQPGTHTKLGIIPTNIFRNGKIGIVSRSGTLTYEAAYATTQAGLGQSTVVGIGGDPFAGQLHTDVIKRFAADPQTEGIILIGEIGGTSEEDAAEWIAKTKLTQEKPVVAFIAGATAPPGKRMGHAGAIVSGGKGTAEGKYKALEAAGVRIARHPGNMGKFIFEEMKRLGKI.

The N-terminal 9 residues, 1–9, are a transit peptide targeting the hydrogenosome; sequence MLSSSFERN. Residues K54 and 107 to 109 contribute to the CoA site; that span reads ITE. Residue Y171 participates in substrate binding. The active-site Tele-phosphohistidine intermediate is the H262.

Belongs to the succinate/malate CoA ligase alpha subunit family. In terms of assembly, heterodimer of an alpha and a beta subunit.

Its subcellular location is the hydrogenosome lumen. It carries out the reaction succinate + ATP + CoA = succinyl-CoA + ADP + phosphate. The protein operates within carbohydrate metabolism; tricarboxylic acid cycle; succinate from succinyl-CoA (ligase route): step 1/1. Its function is as follows. Succinyl-CoA synthetase functions in the citric acid cycle (TCA), coupling the hydrolysis of succinyl-CoA to the synthesis of ATP and thus represents the only step of substrate-level phosphorylation in the TCA. The alpha subunit of the enzyme binds the substrates coenzyme A and phosphate, while succinate binding and nucleotide specificity is provided by the beta subunit. This Trichomonas vaginalis protein is Succinate--CoA ligase [ADP-forming] subunit alpha-2, mitochondrial (ALPHA-SCS2).